The sequence spans 310 residues: Protein BIG GRAIN 1 (310 aa).

A disordered region spans residues 81-141 (RAPGPHATTS…KKAKKPGASI (61 aa)). Residues 90–106 (SSSSECSSYGGFSSSEA) are compositionally biased toward low complexity.

The protein belongs to the BIG GRAIN 1 (BG1) plant protein family.

It localises to the cell membrane. Involved in auxin transport. Positive regulator of the auxin signaling pathway involved in gravitropism, plant growth and grain development. The polypeptide is Protein BIG GRAIN 1 (Oryza sativa subsp. indica (Rice)).